Consider the following 323-residue polypeptide: GTP 3',8-cyclase (323 aa).

Residues 5–228 enclose the Radical SAM core domain; it reads GFGRKVDYLR…TVLRDTSSPA (224 aa). A GTP-binding site is contributed by Arg14. [4Fe-4S] cluster-binding residues include Cys21 and Cys25. S-adenosyl-L-methionine is bound at residue Tyr27. Cys28 lines the [4Fe-4S] cluster pocket. Arg64 provides a ligand contact to GTP. Gly68 serves as a coordination point for S-adenosyl-L-methionine. Thr95 lines the GTP pocket. Residue Ser119 coordinates S-adenosyl-L-methionine. Lys155 is a binding site for GTP. Residue Met189 coordinates S-adenosyl-L-methionine. Positions 250 and 253 each coordinate [4Fe-4S] cluster. 255–257 is a binding site for GTP; the sequence is RIR. Cys267 provides a ligand contact to [4Fe-4S] cluster. The span at 302–313 shows a compositional bias: basic and acidic residues; the sequence is KNKWSQKDDNEV. A disordered region spans residues 302 to 323; sequence KNKWSQKDDNEVSTRAFYQTGG.

Belongs to the radical SAM superfamily. MoaA family. In terms of assembly, monomer and homodimer. It depends on [4Fe-4S] cluster as a cofactor.

The catalysed reaction is GTP + AH2 + S-adenosyl-L-methionine = (8S)-3',8-cyclo-7,8-dihydroguanosine 5'-triphosphate + 5'-deoxyadenosine + L-methionine + A + H(+). It participates in cofactor biosynthesis; molybdopterin biosynthesis. In terms of biological role, catalyzes the cyclization of GTP to (8S)-3',8-cyclo-7,8-dihydroguanosine 5'-triphosphate. The polypeptide is GTP 3',8-cyclase (Aliarcobacter butzleri (strain RM4018) (Arcobacter butzleri)).